We begin with the raw amino-acid sequence, 246 residues long: Biosynthetic peptidoglycan transglycosylase (246 aa).

The chain crosses the membrane as a helical span at residues 20–42 (SLRWVLAAPLLFAAASVLQVLAL).

The protein belongs to the glycosyltransferase 51 family.

The protein resides in the cell inner membrane. The catalysed reaction is [GlcNAc-(1-&gt;4)-Mur2Ac(oyl-L-Ala-gamma-D-Glu-L-Lys-D-Ala-D-Ala)](n)-di-trans,octa-cis-undecaprenyl diphosphate + beta-D-GlcNAc-(1-&gt;4)-Mur2Ac(oyl-L-Ala-gamma-D-Glu-L-Lys-D-Ala-D-Ala)-di-trans,octa-cis-undecaprenyl diphosphate = [GlcNAc-(1-&gt;4)-Mur2Ac(oyl-L-Ala-gamma-D-Glu-L-Lys-D-Ala-D-Ala)](n+1)-di-trans,octa-cis-undecaprenyl diphosphate + di-trans,octa-cis-undecaprenyl diphosphate + H(+). It functions in the pathway cell wall biogenesis; peptidoglycan biosynthesis. Its function is as follows. Peptidoglycan polymerase that catalyzes glycan chain elongation from lipid-linked precursors. This Xanthomonas campestris pv. campestris (strain 8004) protein is Biosynthetic peptidoglycan transglycosylase.